Consider the following 309-residue polypeptide: Short-chain dehydrogenase/reductase ARMGADRAFT_1018437 (309 aa).

Residues Lys64, Asp86, and Asn113 each contribute to the NADP(+) site. Ser167 acts as the Proton donor in catalysis. 2 residues coordinate NADP(+): Tyr196 and Lys200. Residue Tyr196 is the Proton acceptor of the active site. The Lowers pKa of active site Tyr role is filled by Lys200.

The protein belongs to the short-chain dehydrogenases/reductases (SDR) family.

Its pathway is secondary metabolite biosynthesis. In terms of biological role, short-chain dehydrogenase/reductase, part of the gene cluster that mediates the biosynthesis of melleolides, a range of antifungal and phytotoxic polyketide derivatives composed of an orsellinic acid (OA) moiety esterified to various sesquiterpene alcohols. The first step in melleolides biosynthesis is performed by the delta(6)-protoilludene synthase PRO1 which catalyzes the cyclization of farnesyl diphosphate to protoilludene. The orsellinic acid synthase armB produces OA by condensing acetyl-CoA with 3 malonyl-CoA units in a three-round chain elongation reaction folowed by a C2-C7 ring closure. ArmB further catalyzes the trans-esterification of OA to the various sesquiterpene alcohols resulting from the hydroxylation of protoilludene. The melleolides cluster also includes 5 cytochrome P450 monooxygenases, 4 NAD(+)-dependent oxidoreductases, one flavin-dependent oxidoreductase, and one O-methyltransferase. The cytochrome P450 monooxygenases may be involved in protoilludene hydroxylation to elaborate melleolides with multiple alcohol groups, such as melleolide D, which carries alcohol functionalities at C-4, C-5, C-10, and C-13. The role of the NAD(+)-dependent enzymes remains unknown. Numerous melleolides, including arnamial, show 5'-O-methylation of the aromatic moiety which may be catalyzed by the methyltransferase encoded in the cluster. The flavin-dependent oxidoreductase might represent the dehydrogenase yielding the aldehyde in position 1 of arnamial and other melleolides. Finally, several halogenase localized outside of the cluster, are able to catalyze the transfer of a single chlorine atom to the melleolide backbone, resulting in a 6'-chloromelleolide product. This chain is Short-chain dehydrogenase/reductase ARMGADRAFT_1018437, found in Armillaria gallica (Bulbous honey fungus).